A 299-amino-acid chain; its full sequence is Protoheme IX farnesyltransferase 1 (299 aa).

8 helical membrane passes run 25–45, 47–67, 95–115, 119–139, 147–167, 173–193, 226–246, and 279–299; these read VVVL…RAGV, WTVL…AAAV, TGAL…LLTF, LTAW…TGFL, IVIG…AATG, PLLL…ALAI, ALLA…LYLI, and IWYL…LLNL.

It belongs to the UbiA prenyltransferase family. Protoheme IX farnesyltransferase subfamily.

It is found in the cell inner membrane. The enzyme catalyses heme b + (2E,6E)-farnesyl diphosphate + H2O = Fe(II)-heme o + diphosphate. It functions in the pathway porphyrin-containing compound metabolism; heme O biosynthesis; heme O from protoheme: step 1/1. Functionally, converts heme B (protoheme IX) to heme O by substitution of the vinyl group on carbon 2 of heme B porphyrin ring with a hydroxyethyl farnesyl side group. This chain is Protoheme IX farnesyltransferase 1, found in Pseudomonas fluorescens (strain Pf0-1).